Consider the following 632-residue polypeptide: Phosphomethylpyrimidine synthase (632 aa).

Residues 1–13 (MNIRSNPDTTLPA) show a composition bias toward polar residues. A disordered region spans residues 1–26 (MNIRSNPDTTLPAVTTGPLPSSRKIF). Residues Asn-221, Met-250, Tyr-279, His-315, 335 to 337 (SRG), 376 to 379 (DGLR), and Glu-415 contribute to the substrate site. His-419 lines the Zn(2+) pocket. Substrate is bound at residue Tyr-442. A Zn(2+)-binding site is contributed by His-483. [4Fe-4S] cluster is bound by residues Cys-563, Cys-566, and Cys-571.

This sequence belongs to the ThiC family. As to quaternary structure, homodimer. Requires [4Fe-4S] cluster as cofactor.

It catalyses the reaction 5-amino-1-(5-phospho-beta-D-ribosyl)imidazole + S-adenosyl-L-methionine = 4-amino-2-methyl-5-(phosphooxymethyl)pyrimidine + CO + 5'-deoxyadenosine + formate + L-methionine + 3 H(+). Its pathway is cofactor biosynthesis; thiamine diphosphate biosynthesis. Functionally, catalyzes the synthesis of the hydroxymethylpyrimidine phosphate (HMP-P) moiety of thiamine from aminoimidazole ribotide (AIR) in a radical S-adenosyl-L-methionine (SAM)-dependent reaction. The protein is Phosphomethylpyrimidine synthase of Afipia carboxidovorans (strain ATCC 49405 / DSM 1227 / KCTC 32145 / OM5) (Oligotropha carboxidovorans).